A 465-amino-acid polypeptide reads, in one-letter code: FAD-dependent monooxygenase penM (465 aa).

The chain crosses the membrane as a helical span at residues 5 to 25; that stretch reads QFHVIIVGGSIAGLTLAHCLH. FAD contacts are provided by glutamate 35, glycine 49, arginine 108, aspartate 299, and alanine 312. A helical membrane pass occupies residues 435-455; that stretch reads VLVLLLSALTWSCLGNMNIIM.

Belongs to the paxM FAD-dependent monooxygenase family. The cofactor is FAD.

It localises to the membrane. It functions in the pathway secondary metabolite biosynthesis. In terms of biological role, FAD-dependent monooxygenase; part of the gene cluster that mediates the biosynthesis of the indole diterpenes penitrems. The geranylgeranyl diphosphate (GGPP) synthase penG catalyzes the first step in penitrem biosynthesis via conversion of farnesyl pyrophosphate and isopentyl pyrophosphate into geranylgeranyl pyrophosphate (GGPP). Condensation of indole-3-glycerol phosphate with GGPP by the prenyl transferase penC then forms 3-geranylgeranylindole (3-GGI). Epoxidation by the FAD-dependent monooxygenase penM leads to a epoxidized-GGI that is substrate of the terpene cyclase penB for cyclization to yield paspaline. Paspaline is subsequently converted to 13-desoxypaxilline by the cytochrome P450 monooxygenase penP, the latter being then converted to paxilline by the cytochrome P450 monooxygenase penQ. Paxilline is converted to beta-paxitriol via C-10 ketoreduction by the short-chain dehydrogenase PC-15 which can be monoprenylated at the C-20 by the indole diterpene prenyltransferase penD. A two-step elimination (acetylation and elimination) process performed by the O-acetyltransferase PC-16 and the P.simplicissimum ptmI-ortholog not yet identified in P.crustosum, leads to the production of the prenylated form of penijanthine. The FAD-linked oxidoreductase ptmO then converts the prenylated form of penijanthine into PC-M5 which is in turn transformed into PC-M4 by the aromatic dimethylallyltransferase PC-22. A series of oxidation steps involving 4 cytochrome P450 monooxygenases (PC-21, PC-05, PC-23, PC-20) and a FAD-dependent monooxygenase (PC-14) are required for the transformation of PC-M4 to penitrems A and E. Synthesis of these final products is proposed to proceed via penitrems D and C (PC-21, PC-05, PC-14) and penitrems B and F (PC-21, PC-05, PC-14, PC-23). This Penicillium crustosum (Blue mold fungus) protein is FAD-dependent monooxygenase penM.